A 937-amino-acid chain; its full sequence is Bifunctional glutamine synthetase adenylyltransferase/adenylyl-removing enzyme (937 aa).

Residues 1–436 (MSQPIPSASP…AAEFAELLAP (436 aa)) are adenylyl removase. Residues 443 to 937 (PDTLADYWRA…QLRFQPGKGA (495 aa)) form an adenylyl transferase region.

The protein belongs to the GlnE family. Requires Mg(2+) as cofactor.

The catalysed reaction is [glutamine synthetase]-O(4)-(5'-adenylyl)-L-tyrosine + phosphate = [glutamine synthetase]-L-tyrosine + ADP. It catalyses the reaction [glutamine synthetase]-L-tyrosine + ATP = [glutamine synthetase]-O(4)-(5'-adenylyl)-L-tyrosine + diphosphate. Its function is as follows. Involved in the regulation of glutamine synthetase GlnA, a key enzyme in the process to assimilate ammonia. When cellular nitrogen levels are high, the C-terminal adenylyl transferase (AT) inactivates GlnA by covalent transfer of an adenylyl group from ATP to specific tyrosine residue of GlnA, thus reducing its activity. Conversely, when nitrogen levels are low, the N-terminal adenylyl removase (AR) activates GlnA by removing the adenylyl group by phosphorolysis, increasing its activity. The regulatory region of GlnE binds the signal transduction protein PII (GlnB) which indicates the nitrogen status of the cell. The chain is Bifunctional glutamine synthetase adenylyltransferase/adenylyl-removing enzyme from Xanthomonas campestris pv. campestris (strain ATCC 33913 / DSM 3586 / NCPPB 528 / LMG 568 / P 25).